The sequence spans 117 residues: Large ribosomal subunit protein uL22 (117 aa).

This sequence belongs to the universal ribosomal protein uL22 family. As to quaternary structure, part of the 50S ribosomal subunit.

In terms of biological role, this protein binds specifically to 23S rRNA; its binding is stimulated by other ribosomal proteins, e.g. L4, L17, and L20. It is important during the early stages of 50S assembly. It makes multiple contacts with different domains of the 23S rRNA in the assembled 50S subunit and ribosome. The globular domain of the protein is located near the polypeptide exit tunnel on the outside of the subunit, while an extended beta-hairpin is found that lines the wall of the exit tunnel in the center of the 70S ribosome. This chain is Large ribosomal subunit protein uL22, found in Lactobacillus helveticus (strain DPC 4571).